The chain runs to 211 residues: ATP phosphoribosyltransferase (211 aa).

It belongs to the ATP phosphoribosyltransferase family. Short subfamily. Heteromultimer composed of HisG and HisZ subunits.

It localises to the cytoplasm. The enzyme catalyses 1-(5-phospho-beta-D-ribosyl)-ATP + diphosphate = 5-phospho-alpha-D-ribose 1-diphosphate + ATP. It functions in the pathway amino-acid biosynthesis; L-histidine biosynthesis; L-histidine from 5-phospho-alpha-D-ribose 1-diphosphate: step 1/9. Its function is as follows. Catalyzes the condensation of ATP and 5-phosphoribose 1-diphosphate to form N'-(5'-phosphoribosyl)-ATP (PR-ATP). Has a crucial role in the pathway because the rate of histidine biosynthesis seems to be controlled primarily by regulation of HisG enzymatic activity. This Pseudomonas fluorescens (strain Pf0-1) protein is ATP phosphoribosyltransferase.